Consider the following 300-residue polypeptide: Cutinase est2 (300 aa).

The first 39 residues, 1–39 (MSVTTPRRETSLLSRALRATAAAATAVVATVALAAPAQA), serve as a signal peptide directing secretion. A poly(ethylene terephthalate)-binding site is contributed by tyrosine 99. Serine 169 serves as the catalytic Nucleophile. Poly(ethylene terephthalate) is bound by residues methionine 170 and tryptophan 194. Glutamate 213 is a Ca(2+) binding site. The active-site Charge relay system is the aspartate 215. Aspartate 243 lines the Ca(2+) pocket. The Charge relay system role is filled by histidine 247. A disulfide bridge connects residues cysteine 280 and cysteine 298. Ca(2+) is bound at residue glutamate 292.

The protein belongs to the AB hydrolase superfamily. As to quaternary structure, monomer. It depends on Ca(2+) as a cofactor.

The protein resides in the secreted. Its subcellular location is the periplasm. It catalyses the reaction an acetyl ester + H2O = an aliphatic alcohol + acetate + H(+). It carries out the reaction (ethylene terephthalate)(n) + H2O = (ethylene terephthalate)(n-1) + 4-[(2-hydroxyethoxy)carbonyl]benzoate + H(+). The catalysed reaction is a butanoate ester + H2O = an aliphatic alcohol + butanoate + H(+). The enzyme catalyses cutin + H2O = cutin monomers.. It catalyses the reaction a hexanoate ester + H2O = an aliphatic alcohol + hexanoate + H(+). It carries out the reaction an octanoate ester + H2O = an aliphatic alcohol + octanoate + H(+). With respect to regulation, activated by calcium ions. Activated by magnesium ions. Activated by manganese ions. Inhibited by the serine hydrolase inhibitor phenylmethanesulfonyl fluoride (PMSF). Inhibited by the chelator ethylenediaminetetraacetic acid (EDTA). Inhibited by iron ions. Inhibited by aluminum ions. Inhibited by rubidium ions. Inhibited by lithium ions. Its function is as follows. Catalyzes the hydrolysis of cutin, a polyester that forms the structure of plant cuticle. Shows esterase activity towards p-nitrophenol-linked aliphatic esters (pNP-aliphatic esters). Capable of degrading the plastic poly(ethylene terephthalate) (PET), the most abundant polyester plastic in the world. Can also depolymerize the synthetic polyesters poly(epsilon-caprolactone) (PCL), poly(butylene succinate-co-adipate) (PBSA), poly(butylene succinate) (PBS), and poly(lactic acid) (PLA). The protein is Cutinase est2 of Thermobifida alba (Thermomonospora alba).